A 227-amino-acid chain; its full sequence is 2-C-methyl-D-erythritol 4-phosphate cytidylyltransferase (227 aa).

The protein belongs to the IspD/TarI cytidylyltransferase family. IspD subfamily.

It carries out the reaction 2-C-methyl-D-erythritol 4-phosphate + CTP + H(+) = 4-CDP-2-C-methyl-D-erythritol + diphosphate. It functions in the pathway isoprenoid biosynthesis; isopentenyl diphosphate biosynthesis via DXP pathway; isopentenyl diphosphate from 1-deoxy-D-xylulose 5-phosphate: step 2/6. Its function is as follows. Catalyzes the formation of 4-diphosphocytidyl-2-C-methyl-D-erythritol from CTP and 2-C-methyl-D-erythritol 4-phosphate (MEP). In Dehalococcoides mccartyi (strain ATCC BAA-2266 / KCTC 15142 / 195) (Dehalococcoides ethenogenes (strain 195)), this protein is 2-C-methyl-D-erythritol 4-phosphate cytidylyltransferase.